The primary structure comprises 912 residues: Tiger protein E1 (912 aa).

The signal sequence occupies residues 1–22 (MKLKHLTIFLFIFIYRFLFVKS). Residues 23-815 (DCYLINNERP…YSENKSSGFP (793 aa)) lie on the Extracellular side of the membrane. Asn-54, Asn-108, Asn-164, Asn-183, Asn-232, Asn-268, Asn-323, Asn-356, Asn-398, Asn-407, Asn-568, Asn-637, Asn-653, Asn-658, Asn-706, Asn-716, Asn-763, Asn-774, Asn-781, and Asn-809 each carry an N-linked (GlcNAc...) asparagine glycan. IPT/TIG domains follow at residues 532–609 (SSDQ…GPFT) and 612–686 (PVIE…PLII). Residues 715–796 (TNTSDIDQTA…DGQYFIAQIF (82 aa)) enclose the IPT/TIG 3 domain. Residues 816-836 (NEMYIGIVAIIIFLALIFFAI) form a helical membrane-spanning segment. The Cytoplasmic segment spans residues 837-912 (KTQVEKYIEE…IRCCFKEHTD (76 aa)).

It localises to the cell membrane. The sequence is that of Tiger protein E1 (tgrE1) from Dictyostelium discoideum (Social amoeba).